We begin with the raw amino-acid sequence, 630 residues long: MTVEANKETLGFQTEVKQLLHLMIHSLYSNKEIFLRELISNASDAEDKLRFAALKDDKLFEGDSDLKIRLDYDKDAGTITIADNGIGMTRDDVIANLGTIAKSGTAEFLKQLSGDEKKDSKLIGQFGVGFYSAFIVADKVEVFTRKAGEPADNGVHWESKGDGEFTIEPVSREQRGTEIVLHLKPEDKEFADGWKLRSLVKKYSDHISFPVVMKSESEEEDKKGEEETVNDATALWTLPRTEIKDEEYKEFYKHIAHDFEDPLTWSHNKVEGKLDYTSLLYIPKRAPFDLYNREAPRGLKLYVQRVFIMDDAEQFLPLYLRFTKGVIDSNDLSLNVSREILQNDSTVESIRTALTKRVLDMLSKLAKKGGDEYQGFWDEFGTVLKEGPAEDFSNREKIAGLLRFASTHTGEATQNVSLDDYISRMKEGQNKIYYITGDNFAAAKSSPHLEVFRKKGIEVLILSDRIDEWMMGYLSEYDGKQFQDVARGDLDLGEVETEEDKKHQEEAAKEHKDLLERIKTALEDQVQEVRVTNRLTDSPACLVVGQFDMGAQMKKIMEAAGQKVPESKPIFEINVDHPLVQRLETEQGEQRFKELSAVLFDQATLASGEQLKDPGAYVSRLNRLLLELAN.

Residues 1–338 (MTVEANKETL…SNDLSLNVSR (338 aa)) form an a; substrate-binding region. The interval 339–555 (EILQNDSTVE…QFDMGAQMKK (217 aa)) is b. The c stretch occupies residues 556 to 630 (IMEAAGQKVP…LNRLLLELAN (75 aa)).

Belongs to the heat shock protein 90 family. Homodimer.

Its subcellular location is the cytoplasm. Its function is as follows. Molecular chaperone. Has ATPase activity. In Marinobacter nauticus (strain ATCC 700491 / DSM 11845 / VT8) (Marinobacter aquaeolei), this protein is Chaperone protein HtpG.